The sequence spans 201 residues: Small ribosomal subunit protein uS4 (201 aa).

The segment at 26 to 48 (LSKKNYPPGQHGNSRKRKTSEYG) is disordered. In terms of domain architecture, S4 RNA-binding spans 92–155 (GRLDNVVFRL…KSLEVIANSL (64 aa)).

The protein belongs to the universal ribosomal protein uS4 family. Part of the 30S ribosomal subunit. Contacts protein S5. The interaction surface between S4 and S5 is involved in control of translational fidelity.

Its function is as follows. One of the primary rRNA binding proteins, it binds directly to 16S rRNA where it nucleates assembly of the body of the 30S subunit. In terms of biological role, with S5 and S12 plays an important role in translational accuracy. In Bacteroides thetaiotaomicron (strain ATCC 29148 / DSM 2079 / JCM 5827 / CCUG 10774 / NCTC 10582 / VPI-5482 / E50), this protein is Small ribosomal subunit protein uS4.